Here is a 173-residue protein sequence, read N- to C-terminus: MTYFMLFLGLCFVLGGLAVASNPSPYYGVVGLVLASVVGCGWLLSLGVSFVSLVLFMVYLGGMLVVFVYSVSLAADPFPEAWGDWRVVGYGVSFIVVLAAGAVVGGLAGCWDLGVITVDSVGMFSVRLDFSGVAMFYSCGVGMFLVAGWGLLLTLFVVLELVRGLSCGAIRAV.

The next 5 helical transmembrane spans lie at 1–21, 27–47, 48–68, 87–107, and 139–159; these read MTYF…AVAS, YGVV…LSLG, VSFV…VVFV, VVGY…VGGL, and CGVG…FVVL.

It belongs to the complex I subunit 6 family.

The protein resides in the mitochondrion membrane. The enzyme catalyses a ubiquinone + NADH + 5 H(+)(in) = a ubiquinol + NAD(+) + 4 H(+)(out). Core subunit of the mitochondrial membrane respiratory chain NADH dehydrogenase (Complex I) that is believed to belong to the minimal assembly required for catalysis. Complex I functions in the transfer of electrons from NADH to the respiratory chain. The immediate electron acceptor for the enzyme is believed to be ubiquinone. This Synthliboramphus wumizusume (Japanese murrelet) protein is NADH-ubiquinone oxidoreductase chain 6 (MT-ND6).